A 336-amino-acid chain; its full sequence is DNA polymerase beta (336 aa).

K(+)-binding residues include lysine 59, leucine 61, and valine 64. Positions 59, 61, and 64 each coordinate Na(+). Lysine 71 functions as the Nucleophile; Schiff-base intermediate with DNA; for 5'-dRP lyase activity in the catalytic mechanism. Arginine 82 carries the omega-N-methylarginine; by PRMT6 modification. 3 residues coordinate K(+): threonine 100, valine 102, and isoleucine 105. Threonine 100, valine 102, and isoleucine 105 together coordinate Na(+). Arginine 148 contacts a 2'-deoxyribonucleoside 5'-triphosphate. At arginine 151 the chain carries Omega-N-methylarginine; by PRMT6. 4 residues coordinate a 2'-deoxyribonucleoside 5'-triphosphate: serine 179, arginine 182, glycine 188, and aspartate 189. The tract at residues 182–191 is DNA-binding; the sequence is RGAESSGDID. Mg(2+) contacts are provided by aspartate 189, aspartate 191, and aspartate 257.

The protein belongs to the DNA polymerase type-X family. The cofactor is Mg(2+). Methylation by PRMT6 stimulates the polymerase activity by enhancing DNA binding and processivity. In terms of processing, ubiquitinated: monoubiquitinated by huwe1/arf-bp1. Monoubiquitinated protein is then the target of stub1/chip, which catalyzes polyubiquitination from monoubiquitin, leading to degradation by the proteasome. usp47 mediates the deubiquitination of monoubiquitinated protein, preventing polyubiquitination by STUB1/CHIP and its subsequent degradation.

Its subcellular location is the nucleus. The protein resides in the cytoplasm. The catalysed reaction is DNA(n) + a 2'-deoxyribonucleoside 5'-triphosphate = DNA(n+1) + diphosphate. The enzyme catalyses a 5'-end 2'-deoxyribose-2'-deoxyribonucleotide-DNA = (2E,4S)-4-hydroxypenten-2-al-5-phosphate + a 5'-end 5'-phospho-2'-deoxyribonucleoside-DNA + H(+). It carries out the reaction 2'-deoxyribonucleotide-(2'-deoxyribose 5'-phosphate)-2'-deoxyribonucleotide-DNA = a 3'-end 2'-deoxyribonucleotide-(2,3-dehydro-2,3-deoxyribose 5'-phosphate)-DNA + a 5'-end 5'-phospho-2'-deoxyribonucleoside-DNA + H(+). Repair polymerase that plays a key role in base-excision repair. During this process, the damaged base is excised by specific DNA glycosylases, the DNA backbone is nicked at the abasic site by an apurinic/apyrimidic (AP) endonuclease, and POLB removes 5'-deoxyribose-phosphate from the preincised AP site acting as a 5'-deoxyribose-phosphate lyase (5'-dRP lyase); through its DNA polymerase activity, it adds one nucleotide to the 3' end of the arising single-nucleotide gap. Conducts 'gap-filling' DNA synthesis in a stepwise distributive fashion rather than in a processive fashion as for other DNA polymerases. It is also able to cleave sugar-phosphate bonds 3' to an intact AP site, acting as an AP lyase. The sequence is that of DNA polymerase beta (polb) from Danio rerio (Zebrafish).